The sequence spans 487 residues: N-succinylglutamate 5-semialdehyde dehydrogenase (487 aa).

221-226 (GSSDTG) provides a ligand contact to NAD(+). Catalysis depends on residues E244 and C278.

The protein belongs to the aldehyde dehydrogenase family. AstD subfamily.

The enzyme catalyses N-succinyl-L-glutamate 5-semialdehyde + NAD(+) + H2O = N-succinyl-L-glutamate + NADH + 2 H(+). The protein operates within amino-acid degradation; L-arginine degradation via AST pathway; L-glutamate and succinate from L-arginine: step 4/5. Catalyzes the NAD-dependent reduction of succinylglutamate semialdehyde into succinylglutamate. The protein is N-succinylglutamate 5-semialdehyde dehydrogenase of Burkholderia multivorans (strain ATCC 17616 / 249).